A 216-amino-acid polypeptide reads, in one-letter code: Probable nicotinate-nucleotide adenylyltransferase (216 aa).

The protein belongs to the NadD family.

The catalysed reaction is nicotinate beta-D-ribonucleotide + ATP + H(+) = deamido-NAD(+) + diphosphate. It functions in the pathway cofactor biosynthesis; NAD(+) biosynthesis; deamido-NAD(+) from nicotinate D-ribonucleotide: step 1/1. Functionally, catalyzes the reversible adenylation of nicotinate mononucleotide (NaMN) to nicotinic acid adenine dinucleotide (NaAD). The chain is Probable nicotinate-nucleotide adenylyltransferase from Marinobacter nauticus (strain ATCC 700491 / DSM 11845 / VT8) (Marinobacter aquaeolei).